The primary structure comprises 33 residues: Mu-theraphotoxin-Osp1a (33 aa).

3 disulfide bridges follow: Cys2-Cys17, Cys9-Cys22, and Cys16-Cys29.

The protein belongs to the neurotoxin 10 (Hwtx-1) family. In terms of tissue distribution, expressed by the venom gland.

The protein localises to the secreted. Voltage-gated sodium channel Nav1.7/SCN9A inhibitor. This is Mu-theraphotoxin-Osp1a from Orphnaecus sp. (strain Sibaliw/Philippines) (Tarantula spider).